The chain runs to 222 residues: Thymidylate kinase (222 aa).

7–14 (GIDGAGKS) serves as a coordination point for ATP.

This sequence belongs to the thymidylate kinase family.

The catalysed reaction is dTMP + ATP = dTDP + ADP. Its function is as follows. Phosphorylation of dTMP to form dTDP in both de novo and salvage pathways of dTTP synthesis. In Chlorobium chlorochromatii (strain CaD3), this protein is Thymidylate kinase.